Reading from the N-terminus, the 220-residue chain is V-set and transmembrane domain-containing protein 2-like protein (220 aa).

The first 24 residues, 1–24 (MGAPLAAALGALHYLALFLQLGGA), serve as a signal peptide directing secretion. Residues 41–158 (ALFTETPHDM…DGGRGVPRVL (118 aa)) enclose the Ig-like domain. Cys62 and Cys142 are joined by a disulfide. Positions 165–180 (PAPPRAPRPRGQPPGE) are enriched in pro residues. Residues 165–220 (PAPPRAPRPRGQPPGEEPGRGPTLLFLIILPGTGSGTPREAEPHQPHAGGCPARQS) are disordered.

The chain is V-set and transmembrane domain-containing protein 2-like protein (Vstm2l) from Mus musculus (Mouse).